The primary structure comprises 349 residues: Anthranilate phosphoribosyltransferase (349 aa).

5-phospho-alpha-D-ribose 1-diphosphate contacts are provided by residues Gly82, 85–86 (GD), 92–95 (NVST), 110–118 (KHGNRGVSS), and Ser122. Residue Gly82 participates in anthranilate binding. Ser94 serves as a coordination point for Mg(2+). Position 113 (Asn113) interacts with anthranilate. Arg168 is a binding site for anthranilate. The Mg(2+) site is built by Asp227 and Glu228.

This sequence belongs to the anthranilate phosphoribosyltransferase family. In terms of assembly, homodimer. Mg(2+) serves as cofactor.

The catalysed reaction is N-(5-phospho-beta-D-ribosyl)anthranilate + diphosphate = 5-phospho-alpha-D-ribose 1-diphosphate + anthranilate. It functions in the pathway amino-acid biosynthesis; L-tryptophan biosynthesis; L-tryptophan from chorismate: step 2/5. Catalyzes the transfer of the phosphoribosyl group of 5-phosphorylribose-1-pyrophosphate (PRPP) to anthranilate to yield N-(5'-phosphoribosyl)-anthranilate (PRA). This chain is Anthranilate phosphoribosyltransferase, found in Acinetobacter baylyi (strain ATCC 33305 / BD413 / ADP1).